Reading from the N-terminus, the 257-residue chain is Type III pantothenate kinase (257 aa).

Residue 6-13 (DVGNTSTK) participates in ATP binding. Residue 109 to 112 (GADR) participates in substrate binding. Asp111 acts as the Proton acceptor in catalysis. Asp132 provides a ligand contact to K(+). Residue Thr135 participates in ATP binding. Thr187 contributes to the substrate binding site.

The protein belongs to the type III pantothenate kinase family. In terms of assembly, homodimer. The cofactor is NH4(+). Requires K(+) as cofactor.

Its subcellular location is the cytoplasm. It catalyses the reaction (R)-pantothenate + ATP = (R)-4'-phosphopantothenate + ADP + H(+). It functions in the pathway cofactor biosynthesis; coenzyme A biosynthesis; CoA from (R)-pantothenate: step 1/5. Functionally, catalyzes the phosphorylation of pantothenate (Pan), the first step in CoA biosynthesis. The chain is Type III pantothenate kinase from Anaplasma marginale (strain St. Maries).